Consider the following 370-residue polypeptide: Protein DUF642 L-GALACTONO-1,4-LACTONE-RESPONSIVE GENE 1 (370 aa).

The first 22 residues, 1–22 (MMYQEAALLLALLFISSNVVLS), serve as a signal peptide directing secretion. N-linked (GlcNAc...) asparagine glycosylation is present at N124.

As to expression, expressed at low levels in roots, seedlings and leaves.

The protein localises to the secreted. It localises to the cell wall. In Arabidopsis thaliana (Mouse-ear cress), this protein is Protein DUF642 L-GALACTONO-1,4-LACTONE-RESPONSIVE GENE 1.